We begin with the raw amino-acid sequence, 274 residues long: Nitrogenase iron protein (274 aa).

8–15 (GKGGIGKS) serves as a coordination point for ATP. C94 serves as a coordination point for [4Fe-4S] cluster. The residue at position 97 (R97) is an ADP-ribosylarginine; by dinitrogenase reductase ADP-ribosyltransferase. Residue C131 participates in [4Fe-4S] cluster binding.

It belongs to the NifH/BchL/ChlL family. Homodimer. Requires [4Fe-4S] cluster as cofactor. Post-translationally, the reversible ADP-ribosylation of Arg-97 inactivates the nitrogenase reductase and regulates nitrogenase activity.

The catalysed reaction is N2 + 8 reduced [2Fe-2S]-[ferredoxin] + 16 ATP + 16 H2O = H2 + 8 oxidized [2Fe-2S]-[ferredoxin] + 2 NH4(+) + 16 ADP + 16 phosphate + 6 H(+). In terms of biological role, the key enzymatic reactions in nitrogen fixation are catalyzed by the nitrogenase complex, which has 2 components: the iron protein and the molybdenum-iron protein. The sequence is that of Nitrogenase iron protein from Chlorobium phaeobacteroides (strain BS1).